The sequence spans 573 residues: FAD-dependent monooxygenase resA (573 aa).

The first 17 residues, 1–17 (MYDVIVIGAGWCGLVAA), serve as a signal peptide directing secretion. Ile-106 is an FAD binding site. Asn-235 is a glycosylation site (N-linked (GlcNAc...) asparagine).

This sequence belongs to the FAD-binding monooxygenase family. The cofactor is FAD.

It functions in the pathway antifungal biosynthesis. Functionally, FAD-dependent monooxygenase; part of the gene cluster that mediates the biosynthesis of the tetrahydropyranyl antifungal agent restricticin that acts as an inhibitor of CYP51 and blocks the ergosterol biosynthesis. The highly reducing polyketide synthase resH, the short chain dehydrogenase resG, the cyclase resF, the FAD-dependent monooxygenase resA and the enoylreductase resD are required to generate the first stable intermediate desmethylrestrictinol. ResH with resD biosynthesize the first polyketide chain intermediate that is reduced by resG, followed by epoxidation by resA before 6-endo cyclization via epoxide opening by resF leads to desmethylrestrictinol. The methyltransferase resE then catalyzes the C4 O-methylation of desmethylrestrictinol to produce restrictinol, and the nonribosomal peptide synthetase resC catalyzes the C3 esterification of restrictinol with glycine that leads to restricticin. The protein is FAD-dependent monooxygenase resA of Aspergillus sclerotiorum.